The sequence spans 219 residues: Phosphatidylserine decarboxylase proenzyme (219 aa).

The active-site Schiff-base intermediate with substrate; via pyruvic acid is the S188. S188 is modified (pyruvic acid (Ser); by autocatalysis).

This sequence belongs to the phosphatidylserine decarboxylase family. PSD-A subfamily. As to quaternary structure, heterodimer of a large membrane-associated beta subunit and a small pyruvoyl-containing alpha subunit. It depends on pyruvate as a cofactor. Post-translationally, is synthesized initially as an inactive proenzyme. Formation of the active enzyme involves a self-maturation process in which the active site pyruvoyl group is generated from an internal serine residue via an autocatalytic post-translational modification. Two non-identical subunits are generated from the proenzyme in this reaction, and the pyruvate is formed at the N-terminus of the alpha chain, which is derived from the carboxyl end of the proenzyme. The post-translation cleavage follows an unusual pathway, termed non-hydrolytic serinolysis, in which the side chain hydroxyl group of the serine supplies its oxygen atom to form the C-terminus of the beta chain, while the remainder of the serine residue undergoes an oxidative deamination to produce ammonia and the pyruvoyl prosthetic group on the alpha chain.

The protein resides in the cell membrane. The enzyme catalyses a 1,2-diacyl-sn-glycero-3-phospho-L-serine + H(+) = a 1,2-diacyl-sn-glycero-3-phosphoethanolamine + CO2. It participates in phospholipid metabolism; phosphatidylethanolamine biosynthesis; phosphatidylethanolamine from CDP-diacylglycerol: step 2/2. Catalyzes the formation of phosphatidylethanolamine (PtdEtn) from phosphatidylserine (PtdSer). The polypeptide is Phosphatidylserine decarboxylase proenzyme (Ruegeria pomeroyi (strain ATCC 700808 / DSM 15171 / DSS-3) (Silicibacter pomeroyi)).